The sequence spans 306 residues: Dermonecrotic toxin LiSicTox-alphaIA2bi (306 aa).

The first 18 residues, 1–18 (MLPYIALILVCWSVLSQA), serve as a signal peptide directing secretion. A propeptide spanning residues 19 to 26 (AQTDVEGR) is cleaved from the precursor. His38 is a catalytic residue. Mg(2+) contacts are provided by Glu58 and Asp60. His74 (nucleophile) is an active-site residue. Cystine bridges form between Cys78/Cys84 and Cys80/Cys223. Residue Asp118 participates in Mg(2+) binding. An N-linked (GlcNAc...) asparagine glycan is attached at Asn283.

It belongs to the arthropod phospholipase D family. Class II subfamily. Mg(2+) serves as cofactor. Expressed by the venom gland.

Its subcellular location is the secreted. The enzyme catalyses an N-(acyl)-sphingosylphosphocholine = an N-(acyl)-sphingosyl-1,3-cyclic phosphate + choline. The catalysed reaction is an N-(acyl)-sphingosylphosphoethanolamine = an N-(acyl)-sphingosyl-1,3-cyclic phosphate + ethanolamine. It carries out the reaction a 1-acyl-sn-glycero-3-phosphocholine = a 1-acyl-sn-glycero-2,3-cyclic phosphate + choline. It catalyses the reaction a 1-acyl-sn-glycero-3-phosphoethanolamine = a 1-acyl-sn-glycero-2,3-cyclic phosphate + ethanolamine. Dermonecrotic toxins cleave the phosphodiester linkage between the phosphate and headgroup of certain phospholipids (sphingolipid and lysolipid substrates), forming an alcohol (often choline) and a cyclic phosphate. This toxin acts on sphingomyelin (SM). It may also act on ceramide phosphoethanolamine (CPE), lysophosphatidylcholine (LPC) and lysophosphatidylethanolamine (LPE), but not on lysophosphatidylserine (LPS), and lysophosphatidylglycerol (LPG). It acts by transphosphatidylation, releasing exclusively cyclic phosphate products as second products. Induces dermonecrosis, hemolysis, increased vascular permeability, edema, inflammatory response, and platelet aggregation. In Loxosceles intermedia (Brown spider), this protein is Dermonecrotic toxin LiSicTox-alphaIA2bi.